The primary structure comprises 520 residues: GMP synthase [glutamine-hydrolyzing] (520 aa).

A Glutamine amidotransferase type-1 domain is found at 9–202 (RVLIVDFGSQ…LFNIAGLKGD (194 aa)). The active-site Nucleophile is cysteine 86. Residues histidine 176 and glutamate 178 contribute to the active site. The GMPS ATP-PPase domain occupies 203 to 395 (WTMAAFRQEM…LGLAPAFVGR (193 aa)). 230 to 236 (SGGVDSS) is a binding site for ATP.

Homodimer.

It catalyses the reaction XMP + L-glutamine + ATP + H2O = GMP + L-glutamate + AMP + diphosphate + 2 H(+). It functions in the pathway purine metabolism; GMP biosynthesis; GMP from XMP (L-Gln route): step 1/1. Its function is as follows. Catalyzes the synthesis of GMP from XMP. The chain is GMP synthase [glutamine-hydrolyzing] from Caulobacter vibrioides (strain ATCC 19089 / CIP 103742 / CB 15) (Caulobacter crescentus).